Here is a 127-residue protein sequence, read N- to C-terminus: Apolipoprotein C-IV (127 aa).

The N-terminal stretch at 1 to 27 (MSLLRNRLQDLPALCLCVLVLACIGAC) is a signal peptide.

Belongs to the apolipoprotein C4 family.

The protein localises to the secreted. In terms of biological role, may participate in lipoprotein metabolism. This chain is Apolipoprotein C-IV (APOC4), found in Chlorocebus sabaeus (Green monkey).